Reading from the N-terminus, the 271-residue chain is Dermonecrotic toxin LarSicTox-alphaIB1c (271 aa).

Residue His3 is part of the active site. Positions 23 and 25 each coordinate Mg(2+). The Nucleophile role is filled by His39. 2 disulfide bridges follow: Cys43/Cys49 and Cys45/Cys188. Mg(2+) is bound at residue Asp83. The N-linked (GlcNAc...) asparagine glycan is linked to Asn248.

Belongs to the arthropod phospholipase D family. Class II subfamily. Requires Mg(2+) as cofactor. In terms of tissue distribution, expressed by the venom gland.

The protein localises to the secreted. It carries out the reaction an N-(acyl)-sphingosylphosphocholine = an N-(acyl)-sphingosyl-1,3-cyclic phosphate + choline. The catalysed reaction is an N-(acyl)-sphingosylphosphoethanolamine = an N-(acyl)-sphingosyl-1,3-cyclic phosphate + ethanolamine. The enzyme catalyses a 1-acyl-sn-glycero-3-phosphocholine = a 1-acyl-sn-glycero-2,3-cyclic phosphate + choline. It catalyses the reaction a 1-acyl-sn-glycero-3-phosphoethanolamine = a 1-acyl-sn-glycero-2,3-cyclic phosphate + ethanolamine. Dermonecrotic toxins cleave the phosphodiester linkage between the phosphate and headgroup of certain phospholipids (sphingolipid and lysolipid substrates), forming an alcohol (often choline) and a cyclic phosphate. This toxin acts on sphingomyelin (SM). It may also act on ceramide phosphoethanolamine (CPE), lysophosphatidylcholine (LPC) and lysophosphatidylethanolamine (LPE), but not on lysophosphatidylserine (LPS), and lysophosphatidylglycerol (LPG). It acts by transphosphatidylation, releasing exclusively cyclic phosphate products as second products. Induces dermonecrosis, hemolysis, increased vascular permeability, edema, inflammatory response, and platelet aggregation. This chain is Dermonecrotic toxin LarSicTox-alphaIB1c, found in Loxosceles arizonica (Arizona brown spider).